A 306-amino-acid polypeptide reads, in one-letter code: Pantothenate kinase (306 aa).

91 to 98 (GSVAVGKS) is an ATP binding site.

It belongs to the prokaryotic pantothenate kinase family.

The protein resides in the cytoplasm. It catalyses the reaction (R)-pantothenate + ATP = (R)-4'-phosphopantothenate + ADP + H(+). It participates in cofactor biosynthesis; coenzyme A biosynthesis; CoA from (R)-pantothenate: step 1/5. In Streptococcus pyogenes serotype M12 (strain MGAS2096), this protein is Pantothenate kinase.